The sequence spans 449 residues: Probable secreted beta-glucosidase ARB_04747 (449 aa).

The N-terminal stretch at 1-21 (MKFSSGILSLAVAASVQSVQA) is a signal peptide. N-linked (GlcNAc...) asparagine glycosylation is present at Asn-57. Residues 96-185 (SPPACPAPSY…RPFPDGEIDC (90 aa)) are disordered. The span at 98 to 125 (PACPAPSYVPSPPAAPSSPPAAPQPPSK) shows a compositional bias: pro residues. Basic and acidic residues predominate over residues 131-150 (EEPKKPEEPKKPEGPKKPEG).

This sequence belongs to the SUN family.

It is found in the secreted. The protein localises to the cell wall. Its function is as follows. Cell surface beta-glucosidase involved in cytokinesis, cell wall biogenesis, adhesion to host tissue; thus playing an important role in the host-pathogen interaction. Has hydrolytic activity on linear (1-&gt;3)-beta-D-glucans such as laminaribiose and other laminarioligosaccharides. This chain is Probable secreted beta-glucosidase ARB_04747, found in Arthroderma benhamiae (strain ATCC MYA-4681 / CBS 112371) (Trichophyton mentagrophytes).